A 241-amino-acid polypeptide reads, in one-letter code: MAPPRAPYIVPALKKHTATVIMAHGLGDRMSLAQNWRRRGMFDEVAFIFPNAPMIPITVNFGMTMPGWHDLTKLGRELDYESAIRHQDEPGVLRSRDYFNTLIKEQIDKGIKPSRIVLGGFSQGAAISVFTGITCKEKLGGVFGLSSYLVLSDKLKNYIPENWPNKKTPFFLAHGLEDEIVLFDFGDLSAKKMKEIGLEDVTFKSYPNLGHSADPVEIEDLARFLQKVIPPEDDGQASAGL.

Residues Ser-122, Asp-178, and His-211 each act as charge relay system in the active site.

Belongs to the AB hydrolase superfamily. AB hydrolase 2 family.

Its subcellular location is the cytoplasm. The protein localises to the nucleus. It carries out the reaction S-hexadecanoyl-L-cysteinyl-[protein] + H2O = L-cysteinyl-[protein] + hexadecanoate + H(+). In terms of biological role, hydrolyzes fatty acids from S-acylated cysteine residues in proteins with a strong preference for palmitoylated G-alpha proteins over other acyl substrates. Mediates the deacylation of G-alpha proteins such as GPA1 in vivo, but has weak or no activity toward palmitoylated Ras proteins. Has weak lysophospholipase activity in vitro; however such activity may not exist in vivo. In Aspergillus fumigatus (strain ATCC MYA-4609 / CBS 101355 / FGSC A1100 / Af293) (Neosartorya fumigata), this protein is Acyl-protein thioesterase 1.